Here is a 507-residue protein sequence, read N- to C-terminus: ATP synthase subunit alpha, chloroplastic (507 aa).

170 to 177 provides a ligand contact to ATP; that stretch reads GDRQTGKT.

This sequence belongs to the ATPase alpha/beta chains family. In terms of assembly, F-type ATPases have 2 components, CF(1) - the catalytic core - and CF(0) - the membrane proton channel. CF(1) has five subunits: alpha(3), beta(3), gamma(1), delta(1), epsilon(1). CF(0) has four main subunits: a, b, b' and c.

The protein resides in the plastid. It localises to the chloroplast thylakoid membrane. It carries out the reaction ATP + H2O + 4 H(+)(in) = ADP + phosphate + 5 H(+)(out). Its function is as follows. Produces ATP from ADP in the presence of a proton gradient across the membrane. The alpha chain is a regulatory subunit. The sequence is that of ATP synthase subunit alpha, chloroplastic from Ipomoea purpurea (Common morning glory).